A 760-amino-acid polypeptide reads, in one-letter code: Xaa-Pro dipeptidyl-peptidase (760 aa).

Catalysis depends on charge relay system residues serine 349, aspartate 469, and histidine 499.

It belongs to the peptidase S15 family. As to quaternary structure, homodimer.

It localises to the cytoplasm. The catalysed reaction is Hydrolyzes Xaa-Pro-|- bonds to release unblocked, N-terminal dipeptides from substrates including Ala-Pro-|-p-nitroanilide and (sequentially) Tyr-Pro-|-Phe-Pro-|-Gly-Pro-|-Ile.. Removes N-terminal dipeptides sequentially from polypeptides having unsubstituted N-termini provided that the penultimate residue is proline. In Streptococcus pyogenes serotype M5 (strain Manfredo), this protein is Xaa-Pro dipeptidyl-peptidase.